A 178-amino-acid chain; its full sequence is Large ribosomal subunit protein uL16 (178 aa).

The protein belongs to the universal ribosomal protein uL16 family.

This chain is Large ribosomal subunit protein uL16, found in Saccharolobus islandicus (strain Y.N.15.51 / Yellowstone #2) (Sulfolobus islandicus).